Consider the following 69-residue polypeptide: Large ribosomal subunit protein bL31 (69 aa).

Zn(2+) contacts are provided by Cys17, Cys19, Cys37, and Cys40.

It belongs to the bacterial ribosomal protein bL31 family. Type A subfamily. In terms of assembly, part of the 50S ribosomal subunit. Zn(2+) is required as a cofactor.

Its function is as follows. Binds the 23S rRNA. The chain is Large ribosomal subunit protein bL31 from Caldanaerobacter subterraneus subsp. tengcongensis (strain DSM 15242 / JCM 11007 / NBRC 100824 / MB4) (Thermoanaerobacter tengcongensis).